The sequence spans 373 residues: Dual-specificity RNA methyltransferase RlmN (373 aa).

The active-site Proton acceptor is the E94. One can recognise a Radical SAM core domain in the interval 100–339 (EDDRATLCVS…VTIRKTRGDD (240 aa)). Residues C107 and C344 are joined by a disulfide bond. The [4Fe-4S] cluster site is built by C114, C118, and C121. S-adenosyl-L-methionine-binding positions include 168–169 (GE), S200, 222–224 (SLH), and N301. The S-methylcysteine intermediate role is filled by C344.

It belongs to the radical SAM superfamily. RlmN family. Requires [4Fe-4S] cluster as cofactor.

The protein localises to the cytoplasm. It catalyses the reaction adenosine(2503) in 23S rRNA + 2 reduced [2Fe-2S]-[ferredoxin] + 2 S-adenosyl-L-methionine = 2-methyladenosine(2503) in 23S rRNA + 5'-deoxyadenosine + L-methionine + 2 oxidized [2Fe-2S]-[ferredoxin] + S-adenosyl-L-homocysteine. It carries out the reaction adenosine(37) in tRNA + 2 reduced [2Fe-2S]-[ferredoxin] + 2 S-adenosyl-L-methionine = 2-methyladenosine(37) in tRNA + 5'-deoxyadenosine + L-methionine + 2 oxidized [2Fe-2S]-[ferredoxin] + S-adenosyl-L-homocysteine. Its function is as follows. Specifically methylates position 2 of adenine 2503 in 23S rRNA and position 2 of adenine 37 in tRNAs. m2A2503 modification seems to play a crucial role in the proofreading step occurring at the peptidyl transferase center and thus would serve to optimize ribosomal fidelity. The chain is Dual-specificity RNA methyltransferase RlmN from Vibrio cholerae serotype O1 (strain M66-2).